The following is a 92-amino-acid chain: Enhancer of yellow 2 transcription factor (92 aa).

This sequence belongs to the ENY2 family. In terms of assembly, component of the nuclear pore complex (NPC)-associated TREX-2 complex (transcription and export complex 2). Component of the SAGA transcription coactivator-HAT complex. Within the SAGA complex, participates in a subcomplex of SAGA called the DUB module (deubiquitination module).

The protein localises to the nucleus. The protein resides in the nucleoplasm. In terms of biological role, involved in mRNA export coupled transcription activation by association with both the TREX-2 and the SAGA complexes. The transcription regulatory histone acetylation (HAT) complex SAGA is a multiprotein complex that activates transcription by remodeling chromatin and mediating histone acetylation and deubiquitination. Within the SAGA complex, participates in a subcomplex that specifically deubiquitinates histones. The SAGA complex is recruited to specific gene promoters by activators, where it is required for transcription. The TREX-2 complex functions in docking export-competent ribonucleoprotein particles (mRNPs) to the nuclear entrance of the nuclear pore complex (nuclear basket). TREX-2 participates in mRNA export and accurate chromatin positioning in the nucleus by tethering genes to the nuclear periphery. In Aedes aegypti (Yellowfever mosquito), this protein is Enhancer of yellow 2 transcription factor.